We begin with the raw amino-acid sequence, 85 residues long: Small ribosomal subunit protein uS17 (85 aa).

The protein belongs to the universal ribosomal protein uS17 family. Part of the 30S ribosomal subunit.

In terms of biological role, one of the primary rRNA binding proteins, it binds specifically to the 5'-end of 16S ribosomal RNA. This chain is Small ribosomal subunit protein uS17, found in Pasteurella multocida (strain Pm70).